A 1140-amino-acid chain; its full sequence is uncharacterized protein (1140 aa).

Disordered regions lie at residues 1-49 (MGSS…TSPE), 97-243 (SSDI…STIS), 280-427 (TSSS…KSSV), 512-541 (ASST…DLSK), 702-747 (FSTP…STAS), 916-1059 (CPEK…PIGR), and 1080-1103 (LSSS…GTSS). The span at 105–129 (VNDVESSTSGPSNSYSALSSTNAQL) shows a compositional bias: polar residues. 3 stretches are compositionally biased toward low complexity: residues 130 to 154 (SSST…TSSS), 172 to 214 (TTAS…TTSD), and 221 to 243 (SSST…STIS). The segment covering 516-528 (LGSKVSSSNSRMA) has biased composition (polar residues). Low complexity-rich tracts occupy residues 529 to 541 (TSKT…DLSK) and 703 to 718 (STPE…VTSE). Over residues 719–733 (APSTVSSMTTSAPFI) the composition is skewed to polar residues. Residues 734-747 (NNSTSARPSPSTAS) show a composition bias toward low complexity. Residues 949–961 (SFKDMKTSQETKK) show a composition bias toward basic and acidic residues. Low complexity predominate over residues 977 to 997 (EKTSPTTKASPSTSPSESKAA). Composition is skewed to polar residues over residues 998 to 1023 (GNTS…STSV), 1031 to 1055 (TKNS…STES), and 1089 to 1103 (RSTT…GTSS).

This is an uncharacterized protein from Saccharomyces cerevisiae (strain ATCC 204508 / S288c) (Baker's yeast).